The chain runs to 365 residues: Serpentine receptor class epsilon-21 (365 aa).

A run of 7 helical transmembrane segments spans residues 49-69, 82-102, 116-136, 158-178, 189-209, 250-270, and 292-314; these read ILIN…VFCI, IIIS…FVFI, LLFW…HTLL, VWIA…YAFL, IFIV…IIYF, VVVV…PIIL, and PLVV…LSYY.

This sequence belongs to the nematode receptor-like protein sre family.

It localises to the membrane. This chain is Serpentine receptor class epsilon-21 (sre-21), found in Caenorhabditis elegans.